A 178-amino-acid polypeptide reads, in one-letter code: Caveolin-1 (178 aa).

The residue at position 2 (serine 2) is an N-acetylserine. Serine 2 is subject to Phosphoserine. The tract at residues 2–94 (SGGKYVDSEG…WKASFTTFTV (93 aa)) is required for homooligomerization. The Cytoplasmic portion of the chain corresponds to 2-104 (SGGKYVDSEG…TKYWFYRLLS (103 aa)). Lysine 5 is subject to N6-acetyllysine; alternate. Lysine 5 is covalently cross-linked (Glycyl lysine isopeptide (Lys-Gly) (interchain with G-Cter in ubiquitin); alternate). Tyrosine 6 carries the post-translational modification Phosphotyrosine. Serine 9 is modified (phosphoserine). Tyrosine 14 carries the post-translational modification Phosphotyrosine; by ABL1. Residue tyrosine 25 is modified to Phosphotyrosine. Glycyl lysine isopeptide (Lys-Gly) (interchain with G-Cter in ubiquitin) cross-links involve residues lysine 26 and lysine 30. A Phosphoserine modification is found at serine 37. Glycyl lysine isopeptide (Lys-Gly) (interchain with G-Cter in ubiquitin) cross-links involve residues lysine 39, lysine 47, and lysine 57. The segment at 82 to 94 (DGIWKASFTTFTV) is interaction with CAVIN3. An intramembrane region (helical) is located at residues 105–125 (ALFGIPMALIWGIYFAILSFL). The Cytoplasmic segment spans residues 126-178 (HIWAVVPCIKSFLIEIQCISRVYSIYVHTVCDPLFEAVGKIFSNVRINLQKEI). The interacts with SPRY1, SPRY2, SPRY3 and SPRY4 stretch occupies residues 131 to 142 (VPCIKSFLIEIQ). 3 S-palmitoyl cysteine lipidation sites follow: cysteine 133, cysteine 143, and cysteine 156. Residues 149–160 (SIYVHTVCDPLF) form an interacts with SPRY1, SPRY2, and SPRY4 region. The interval 167-178 (FSNVRINLQKEI) is interacts with SPRY1, SPRY2, SPRY3 and SPRY4.

This sequence belongs to the caveolin family. Homooligomer. Interacts (via the N-terminus) with DPP4; the interaction is direct. Forms a stable heterooligomeric complex with CAV2 that targets to lipid rafts and drives caveolae formation. Interacts with PACSIN2; this interaction induces membrane tubulation. Interacts with BMX, BTK, CTNNB1, CDH1, GLIPR2, JUP, NOSTRIN, SNAP25 and STX1A. Interacts with SLC7A9. Interacts with TGFBR1. Interacts with CAVIN3 (via leucine-zipper domain) in a cholesterol-sensitive manner. Interacts with CAVIN1. Interacts with EHD2 in a cholesterol-dependent manner. Forms a ternary complex with UBXN6 and VCP; mediates CAV1 targeting to lysosomes for degradation. Interacts with ABCG1; this interaction regulates ABCG1-mediated cholesterol efflux. Interacts with NEU3; this interaction enhances NEU3 sialidase activity within caveola. Interacts (via C-terminus) with SPRY1, SPRY2 (via C-terminus), SPRY3, and SPRY4. Interacts with IGFBP5; this interaction allows trafficking of IGFBP5 from the plasma membrane to the nucleus. Post-translationally, phosphorylated at Tyr-14 by ABL1 in response to oxidative stress. In terms of processing, ubiquitinated. Undergo monoubiquitination and multi- and/or polyubiquitination. Monoubiquitination of N-terminal lysines promotes integration in a ternary complex with UBXN6 and VCP which promotes oligomeric CAV1 targeting to lysosomes for degradation. Ubiquitinated by ZNRF1; leading to degradation and modulation of the TLR4-mediated immune response.

The protein localises to the golgi apparatus membrane. The protein resides in the cell membrane. It localises to the membrane. Its subcellular location is the caveola. It is found in the membrane raft. Its function is as follows. May act as a scaffolding protein within caveolar membranes. Forms a stable heterooligomeric complex with CAV2 that targets to lipid rafts and drives caveolae formation. Mediates the recruitment of CAVIN proteins (CAVIN1/2/3/4) to the caveolae. Interacts directly with G-protein alpha subunits and can functionally regulate their activity. Involved in the costimulatory signal essential for T-cell receptor (TCR)-mediated T-cell activation. Its binding to DPP4 induces T-cell proliferation and NF-kappa-B activation in a T-cell receptor/CD3-dependent manner. Recruits CTNNB1 to caveolar membranes and may regulate CTNNB1-mediated signaling through the Wnt pathway. Negatively regulates TGFB1-mediated activation of SMAD2/3 by mediating the internalization of TGFBR1 from membrane rafts leading to its subsequent degradation. Binds 20(S)-hydroxycholesterol (20(S)-OHC). The protein is Caveolin-1 (CAV1) of Chlorocebus aethiops (Green monkey).